The chain runs to 360 residues: Inward rectifier potassium channel 13 (360 aa).

The Cytoplasmic segment spans residues 1–50 (MDSSNCKVNAPLLSQRHRRMVTKDGHSTLQMDGAQRGLVYLRDAWGILMD). Residues 51–77 (MRWRWMMLVFSASFVVHWLVFAVLWYA) traverse the membrane as a helical segment. At 78-105 (VAEMNGDLEIDHDVPPENHTICVKHITS) the chain is on the extracellular side. Residues 106 to 122 (FTAAFSFSLETQLTIGY) constitute an intramembrane region (helical; Pore-forming). The Selectivity filter motif lies at 119–124 (TIGYGT). Residues 123–131 (GTMFPSGDC) are Extracellular-facing. A helical membrane pass occupies residues 132-157 (PSAIALLAIQMLLGLMLEAFITGAFV). Residues 158–360 (AKIARPKNRA…FQIAETGLTE (203 aa)) are Cytoplasmic-facing. A Phosphoserine; by PKA modification is found at serine 287.

This sequence belongs to the inward rectifier-type potassium channel (TC 1.A.2.1) family. KCNJ13 subfamily. As to quaternary structure, homotetramer. Interacts with RAB28; the interaction may facilitate cone outer segments phagocytosis. In terms of processing, phosphorylation at Ser-287 by PKA increases ionic currents. Expressed in retina.

Its subcellular location is the membrane. The protein resides in the cell membrane. It catalyses the reaction K(+)(in) = K(+)(out). Its activity is regulated as follows. Inhibited by Ba(2+) and Cs(+), although sensitivity to those inhibitors is much lower than in other Kir channels. Functionally, inward rectifier potassium channels are characterized by a greater tendency to allow potassium to flow into the cell rather than out of it. Their voltage dependence is regulated by the concentration of extracellular potassium; as external potassium is raised, the voltage range of the channel opening shifts to more positive voltages. The inward rectification is mainly due to the blockage of outward current by internal magnesium. KCNJ13 has a very low single channel conductance, low sensitivity to block by external barium and cesium, and no dependence of its inward rectification properties on the internal blocking particle magnesium. This chain is Inward rectifier potassium channel 13, found in Mus musculus (Mouse).